A 242-amino-acid polypeptide reads, in one-letter code: MAGHSKWANIQHKKARQDAKRGKIFTRLIKEITVAARMGGGDPGANPRLRLALEKAAENNMPKDNVQRAIDKGTGNLEGVEYIELRYEGYGIGGAALMVDCLTDNKTRTVADVRHAFTKNGGNLGTDGCVAFNFVHQGYLVFEPGVDEDALMEAALEAGAEDVVTNDDGSIEVITAPNDWAGVKSALEAAGYKSVDGDVTMRAQNETELSGDDAVKMQKLIDALEDLDDVQDVYTSAVLNLD.

The protein belongs to the TACO1 family.

The protein localises to the cytoplasm. In Neisseria meningitidis serogroup A / serotype 4A (strain DSM 15465 / Z2491), this protein is Probable transcriptional regulatory protein NMA1902.